The sequence spans 104 residues: Zinc-containing ferredoxin-1 (104 aa).

An N-terminal extension region spans residues 2-37 (GIDPNYRTNRQVVGEHSGHKVYGPVEPPKVLGIHGT). 2 residues coordinate Zn(2+): histidine 17 and histidine 20. An N6-methyllysine modification is found at lysine 30. Histidine 35 is a Zn(2+) binding site. 4Fe-4S ferredoxin-type domains are found at residues 38-66 (IVGVDFDLCIADGSCINACPVNVFQWYDT) and 75-104 (KADPVNEQACIFCMACVNVCPVAAIDVKPP). [3Fe-4S] cluster-binding residues include cysteine 46 and cysteine 52. Cysteine 56 lines the [4Fe-4S] cluster pocket. A Zn(2+)-binding site is contributed by aspartate 77. [4Fe-4S] cluster-binding residues include cysteine 84, cysteine 87, and cysteine 90. Cysteine 94 serves as a coordination point for [3Fe-4S] cluster.

Requires [3Fe-4S] cluster as cofactor. It depends on [4Fe-4S] cluster as a cofactor. Zn(2+) is required as a cofactor.

Ferredoxins are iron-sulfur proteins that transfer electrons in a wide variety of metabolic reactions. This Sulfurisphaera tokodaii (strain DSM 16993 / JCM 10545 / NBRC 100140 / 7) (Sulfolobus tokodaii) protein is Zinc-containing ferredoxin-1 (zfx1).